A 228-amino-acid polypeptide reads, in one-letter code: Lipoprotein-releasing system ATP-binding protein LolD (228 aa).

The ABC transporter domain maps to 9–228 (LEAHDIQKNF…ELINGCLYRR (220 aa)). Position 44-51 (44-51 (GRSGEGKS)) interacts with ATP.

Belongs to the ABC transporter superfamily. Lipoprotein translocase (TC 3.A.1.125) family. As to quaternary structure, the complex is composed of two ATP-binding proteins (LolD) and two transmembrane proteins (LolC and LolE).

Its subcellular location is the cell inner membrane. Functionally, part of the ABC transporter complex LolCDE involved in the translocation of mature outer membrane-directed lipoproteins, from the inner membrane to the periplasmic chaperone, LolA. Responsible for the formation of the LolA-lipoprotein complex in an ATP-dependent manner. This Protochlamydia amoebophila (strain UWE25) protein is Lipoprotein-releasing system ATP-binding protein LolD.